Here is a 30-residue protein sequence, read N- to C-terminus: Brevinin-2Ej (30 aa).

An intrachain disulfide couples Cys24 to Cys30.

As to expression, expressed by the skin glands.

The protein resides in the secreted. Its function is as follows. Shows antibacterial activity against representative Gram-negative and Gram-positive bacterial species, and hemolytic activity. The chain is Brevinin-2Ej from Pelophylax ridibundus (Marsh frog).